The chain runs to 194 residues: Histone H1.0 (194 aa).

Met1 is subject to N-acetylmethionine. Over residues 1 to 11 (MTENSTSAPAA) the composition is skewed to low complexity. A disordered region spans residues 1-29 (MTENSTSAPAAKPKRAKASKKSTDHPKYS). Thr2 carries the post-translational modification N-acetylthreonine; partial; in Histone H1.0, N-terminally processed. A Deamidated asparagine; partial modification is found at Asn4. An H15 domain is found at 24–97 (DHPKYSDMIV…GASGSFRLAK (74 aa)). Arg42 carries the citrulline modification. Residues 84 to 194 (TKGVGASGSF…SSAKRAGKKK (111 aa)) are disordered. Residue Ser104 is modified to ADP-ribosylserine. Over residues 105-194 (VAFKKTKKEI…SSAKRAGKKK (90 aa)) the composition is skewed to basic residues.

The protein belongs to the histone H1/H5 family. Post-translationally, phosphorylated on Ser-17 in RNA edited version. ADP-ribosylated on Ser-104 in response to DNA damage.

It localises to the nucleus. It is found in the chromosome. Functionally, histones H1 are necessary for the condensation of nucleosome chains into higher-order structures. The histones H1.0 are found in cells that are in terminal stages of differentiation or that have low rates of cell division. The sequence is that of Histone H1.0 from Homo sapiens (Human).